A 155-amino-acid chain; its full sequence is Ubiquitin-conjugating enzyme E2 14 (155 aa).

The region spanning 7 to 154 is the UBC core domain; that stretch reads SSSRRLTKEY…ARDYVEQFAK (148 aa). C91 serves as the catalytic Glycyl thioester intermediate.

This sequence belongs to the ubiquitin-conjugating enzyme family.

It carries out the reaction S-ubiquitinyl-[E1 ubiquitin-activating enzyme]-L-cysteine + [E2 ubiquitin-conjugating enzyme]-L-cysteine = [E1 ubiquitin-activating enzyme]-L-cysteine + S-ubiquitinyl-[E2 ubiquitin-conjugating enzyme]-L-cysteine.. It functions in the pathway protein modification; protein ubiquitination. Catalyzes the covalent attachment of ubiquitin to other proteins. Mediates the selective degradation of short-lived and abnormal proteins. This Schizosaccharomyces pombe (strain 972 / ATCC 24843) (Fission yeast) protein is Ubiquitin-conjugating enzyme E2 14 (ubc14).